The following is a 442-amino-acid chain: C4-dicarboxylate transport protein (442 aa).

8 helical membrane passes run 10–30 (VQVL…PSLG), 40–60 (FIKL…VSGI), 77–97 (LLYF…IVNI), 144–164 (FTQG…FALL), 183–203 (VIFV…FGAM), 221–241 (LMIT…GLIA), 331–351 (LLGV…SGFI), and 354–374 (AATL…ILGI). Residues 418–442 (LPTIEPDVHSEERGEGRELDSLRPA) are disordered. The span at 423–442 (PDVHSEERGEGRELDSLRPA) shows a compositional bias: basic and acidic residues.

It belongs to the dicarboxylate/amino acid:cation symporter (DAACS) (TC 2.A.23) family.

Its subcellular location is the cell membrane. In terms of biological role, responsible for the transport of dicarboxylates such as succinate, fumarate, and malate across the membrane. The chain is C4-dicarboxylate transport protein from Deinococcus deserti (strain DSM 17065 / CIP 109153 / LMG 22923 / VCD115).